The chain runs to 126 residues: MPTINQLVRKGRASETTKSKSPALQDCPQRRGVCTRVYTTTPKKPNSALRKVAKVRLTNGFEVISYIGGEGHNLQEHSVVLIRGGRVKDLPGVRYHMVRGSLDTQGVKDRKQARSKYGAKRAKAGK.

The tract at residues 1–26 is disordered; the sequence is MPTINQLVRKGRASETTKSKSPALQD. At D89 the chain carries 3-methylthioaspartic acid. Residues 103–126 are disordered; that stretch reads DTQGVKDRKQARSKYGAKRAKAGK. The segment covering 113-126 has biased composition (basic residues); that stretch reads ARSKYGAKRAKAGK.

It belongs to the universal ribosomal protein uS12 family. Part of the 30S ribosomal subunit. Contacts proteins S8 and S17. May interact with IF1 in the 30S initiation complex.

Its function is as follows. With S4 and S5 plays an important role in translational accuracy. In terms of biological role, interacts with and stabilizes bases of the 16S rRNA that are involved in tRNA selection in the A site and with the mRNA backbone. Located at the interface of the 30S and 50S subunits, it traverses the body of the 30S subunit contacting proteins on the other side and probably holding the rRNA structure together. The combined cluster of proteins S8, S12 and S17 appears to hold together the shoulder and platform of the 30S subunit. This is Small ribosomal subunit protein uS12 from Paraburkholderia xenovorans (strain LB400).